The following is a 234-amino-acid chain: tRNA (guanine-N(1)-)-methyltransferase (234 aa).

S-adenosyl-L-methionine-binding positions include glycine 115 and valine 135 to leucine 140.

This sequence belongs to the RNA methyltransferase TrmD family. As to quaternary structure, homodimer.

The protein resides in the cytoplasm. The enzyme catalyses guanosine(37) in tRNA + S-adenosyl-L-methionine = N(1)-methylguanosine(37) in tRNA + S-adenosyl-L-homocysteine + H(+). Functionally, specifically methylates guanosine-37 in various tRNAs. The sequence is that of tRNA (guanine-N(1)-)-methyltransferase from Rickettsia rickettsii (strain Iowa).